The chain runs to 207 residues: Fibronectin type III domain-containing protein 5b (207 aa).

Positions Met1–Ala26 are cleaved as a signal peptide. The Extracellular portion of the chain corresponds to Asp27–Arg146. In terms of domain architecture, Fibronectin type-III spans Ala31–Glu122. N-linked (GlcNAc...) asparagine glycosylation is found at Asn34 and Asn79. The helical transmembrane segment at Ala147–Phe167 threads the bilayer. Topologically, residues Cys168–Val207 are cytoplasmic. Residues Glu178–Asn188 are compositionally biased toward basic and acidic residues. The tract at residues Glu178–Val207 is disordered. A Microbody targeting signal motif is present at residues Ser205–Val207.

Dimer; may exist in other oligomeric forms. In terms of processing, the extracellular domain is cleaved and released from the cell membrane.

Its subcellular location is the cell membrane. It is found in the peroxisome membrane. It localises to the secreted. In terms of biological role, may mediate beneficial effects of muscular exercise. The sequence is that of Fibronectin type III domain-containing protein 5b (fndc5b) from Danio rerio (Zebrafish).